The following is a 315-amino-acid chain: Deoxyribonuclease-1-like 1 (315 aa).

Residues 1 to 29 (MDSSGGFQKHTCGHALLLLLLLLAGGAEA) form the signal peptide. Residues glutamate 108 and histidine 159 contribute to the active site. A disulfide bridge connects residues cysteine 198 and cysteine 235. The N-linked (GlcNAc...) asparagine glycan is linked to asparagine 272.

This sequence belongs to the DNase I family.

It localises to the endoplasmic reticulum. The polypeptide is Deoxyribonuclease-1-like 1 (DNASE1L1) (Sus scrofa (Pig)).